The chain runs to 257 residues: Ribonuclease HII (257 aa).

The 186-residue stretch at 72–257 folds into the RNase H type-2 domain; that stretch reads TYIAGIDEVG…FAPIKDMIKK (186 aa). A divalent metal cation contacts are provided by D78, E79, and D170.

The protein belongs to the RNase HII family. The cofactor is Mn(2+). Mg(2+) serves as cofactor.

Its subcellular location is the cytoplasm. The enzyme catalyses Endonucleolytic cleavage to 5'-phosphomonoester.. Endonuclease that specifically degrades the RNA of RNA-DNA hybrids. This Bacillus anthracis (strain A0248) protein is Ribonuclease HII.